A 131-amino-acid polypeptide reads, in one-letter code: Profilin-1 (131 aa).

It belongs to the profilin family. In terms of assembly, occurs in many kinds of cells as a complex with monomeric actin in a 1:1 ratio.

The protein resides in the cytoplasm. The protein localises to the cytoskeleton. Functionally, binds to actin and affects the structure of the cytoskeleton. At high concentrations, profilin prevents the polymerization of actin, whereas it enhances it at low concentrations. By binding to PIP2, it inhibits the formation of IP3 and DG. The polypeptide is Profilin-1 (PRO1) (Hordeum vulgare (Barley)).